Here is a 949-residue protein sequence, read N- to C-terminus: ATPase 5, plasma membrane-type (949 aa).

Ser2 is subject to N-acetylserine. The Cytoplasmic portion of the chain corresponds to 2–61 (SELDHIKNESVDLVRIPMEEVFEELKCTKQGLTANEASHRLDVFGPNKLEEKKESKLLKF). The helical transmembrane segment at 62-81 (LGFMWNPLSWVMEVAALMAI) threads the bilayer. Topologically, residues 82–93 (ALANGGGRPPDW) are extracellular. Residues 94 to 114 (QDFVGIVCLLLINSTISFIEE) traverse the membrane as a helical segment. Residues 115–243 (NNAGNAAAAL…GHFQKVLTSI (129 aa)) are Cytoplasmic-facing. The chain crosses the membrane as a helical span at residues 244–264 (GNFCICSIALGIIVELLVMYP). Over 265-273 (IQRRRYRDG) the chain is Extracellular. A helical transmembrane segment spans residues 274–291 (IDNLLVLLIGGIPIAMPS). Topologically, residues 292–643 (VLSVTMATGS…TSRAIFQRMK (352 aa)) are cytoplasmic. The active-site 4-aspartylphosphate intermediate is the Asp329. Mg(2+)-binding residues include Asp588 and Asp592. A helical membrane pass occupies residues 644 to 665 (NYTIYAVSITIRIVFGFMFIAL). At 666–670 (IWQFD) the chain is on the extracellular side. A helical transmembrane segment spans residues 671–693 (FSPFMVLIIAILNDGTIMTISKD). Residues 694 to 709 (RMKPSPQPDSWKLRDI) lie on the Cytoplasmic side of the membrane. A helical transmembrane segment spans residues 710–730 (FSTGVVLGGYQALMTVVFFWV). The Extracellular segment spans residues 731–751 (MKDSDFFSNYFGVRPLSQRPE). A helical transmembrane segment spans residues 752–772 (QMMAALYLQVSIISQALIFVT). Topologically, residues 773-784 (RSRSWSYAECPG) are cytoplasmic. The helical transmembrane segment at 785–805 (LLLLGAFVIAQLVATFIAVYA) threads the bilayer. Residues 806-813 (NWSFARIE) are Extracellular-facing. Residues 814–834 (GAGWGWAGVIWLYSFLTYIPL) form a helical membrane-spanning segment. Residues 835–949 (DLLKFGIRYV…IDTIQQHYTV (115 aa)) are Cytoplasmic-facing. Thr881 bears the Phosphothreonine mark. Ser899 and Ser931 each carry phosphoserine. Residues 947–949 (YTV) form an interaction with 14-3-3 proteins region. Thr948 is modified (phosphothreonine).

The protein belongs to the cation transport ATPase (P-type) (TC 3.A.3) family. Type IIIA subfamily. Binds to 14-3-3 proteins. The binding is induced by phosphorylation of Thr-948. Binding to 14-3-3 proteins activates the H(+)-ATPase. In terms of tissue distribution, expressed in guard cells and leaves.

The protein localises to the membrane. It catalyses the reaction ATP + H2O + H(+)(in) = ADP + phosphate + 2 H(+)(out). In terms of biological role, the plasma membrane H(+) ATPase of plants and fungi generates a proton gradient that drives the active transport of nutrients by H(+)-symport. The resulting external acidification and/or internal alkinization may mediate growth responses. This Arabidopsis thaliana (Mouse-ear cress) protein is ATPase 5, plasma membrane-type (AHA5).